The chain runs to 64 residues: Bactridin-2 (64 aa).

The LCN-type CS-alpha/beta domain occupies 1 to 63 (KDGYLVGNDG…TWNRATNRCG (63 aa)). 4 disulfides stabilise this stretch: cysteine 11–cysteine 62, cysteine 15–cysteine 37, cysteine 23–cysteine 43, and cysteine 27–cysteine 45.

Belongs to the long (4 C-C) scorpion toxin superfamily. Sodium channel inhibitor family. Beta subfamily. Expressed by the venom gland.

It is found in the secreted. Shows antibacterial activity against both Gram-positive bacteria (B.subtilis, M.luteus, E.faecalis) and Gram-negative bacteria (P.aeruginosa, Y.enterocolitica, A.calcoaceticus). Modifies membrane sodium permeability on Y.enterocolitica. Is toxic to mice, but is not to crabs. Induces concentration dependent haemolysis in human erythrocytes. Acts by inhibiting the sodium (Nav) currents. The polypeptide is Bactridin-2 (Tityus discrepans (Venezuelan scorpion)).